A 584-amino-acid polypeptide reads, in one-letter code: Eukaryotic translation initiation factor 3 subunit D (584 aa).

Positions 118–184 (IFTRGRGQRG…KDYDKPQRNR (67 aa)) are disordered. Gly residues predominate over residues 127 to 167 (GRGGQDTRGGGRQQFQRGGRGGQQYGGGGYSDRGGGRGGGA). Over residues 173–184 (GWKDYDKPQRNR) the composition is skewed to basic and acidic residues. An RNA gate region spans residues 312-326 (ALDMVTVNENAADAP). A disordered region spans residues 563–584 (PANGLDDDDEGPEPEGVAEEED). The span at 567–584 (LDDDDEGPEPEGVAEEED) shows a compositional bias: acidic residues.

It belongs to the eIF-3 subunit D family. In terms of assembly, component of the eukaryotic translation initiation factor 3 (eIF-3) complex.

Its subcellular location is the cytoplasm. Its function is as follows. mRNA cap-binding component of the eukaryotic translation initiation factor 3 (eIF-3) complex, which is involved in protein synthesis of a specialized repertoire of mRNAs and, together with other initiation factors, stimulates binding of mRNA and methionyl-tRNAi to the 40S ribosome. The eIF-3 complex specifically targets and initiates translation of a subset of mRNAs involved in cell proliferation. In the eIF-3 complex, eif3d specifically recognizes and binds the 7-methylguanosine cap of a subset of mRNAs. In Chaetomium globosum (strain ATCC 6205 / CBS 148.51 / DSM 1962 / NBRC 6347 / NRRL 1970) (Soil fungus), this protein is Eukaryotic translation initiation factor 3 subunit D.